The primary structure comprises 447 residues: Clusterin (447 aa).

The N-terminal stretch at 1–22 is a signal peptide; sequence MKTLLLCVGLLLSWERGQVLGD. A Nuclear localization signal motif is present at residues 77-80; the sequence is KKNK. N-linked (GlcNAc...) asparagine glycosylation is found at asparagine 85 and asparagine 102. 5 disulfides stabilise this stretch: cysteine 101-cysteine 311, cysteine 112-cysteine 303, cysteine 115-cysteine 300, cysteine 120-cysteine 293, and cysteine 128-cysteine 283. Phosphoserine is present on serine 132. Residues asparagine 144, asparagine 289, asparagine 326, asparagine 352, and asparagine 372 are each glycosylated (N-linked (GlcNAc...) asparagine). At serine 394 the chain carries Phosphoserine. The short motif at 441-445 is the Nuclear localization signal element; sequence RKKKR.

This sequence belongs to the clusterin family. Antiparallel disulfide-linked heterodimer of an alpha chain and a beta chain. Self-associates and forms higher oligomers. Interacts with a broad range of misfolded proteins, including APP, APOC2 and LYZ. Slightly acidic pH promotes interaction with misfolded proteins. Forms high-molecular weight oligomers upon interaction with misfolded proteins. Interacts with APOA1, LRP2, CLUAP1 and PON1. Interacts with the complement membrane attack complex. Interacts (via alpha chain) with XRCC6. Interacts with SYVN1, COMMD1, BTRC, CUL1 and with ubiquitin and SCF (SKP1-CUL1-F-box protein) E3 ubiquitin-protein ligase complexes. Interacts (via alpha chain) with BAX in stressed cells, where BAX undergoes a conformation change leading to association with the mitochondrial membrane. Does not interact with BAX in unstressed cells. Found in a complex with LTF, CLU, EPPIN and SEMG1. Interacts (immaturely glycosylated pre-secreted form) with HSPA5; this interaction promotes CLU stability and facilitates stress-induced CLU retrotranslocation from the secretory pathway to the mitochondria, thereby reducing stress-induced apoptosis by stabilizing mitochondrial membrane integrity. Interacts with BCL2L1; this interaction releases and activates BAX and promotes cell death. Interacts with TGFBR2 and ACVR1. Interacts (secreted form) with STMN3; this interaction may act as an important modulator during neuronal differentiation. Interacts with VLDLR and LRP8. In terms of processing, proteolytically cleaved on its way through the secretory system, probably within the Golgi lumen. Proteolytic cleavage is not necessary for its chaperone activity. All non-secreted forms are not proteolytically cleaved. Chaperone activity of uncleaved forms is dependent on a non-reducing environment. Post-translationally, polyubiquitinated, leading to proteasomal degradation. Under cellular stress, the intracellular level of cleaved form is reduced due to proteasomal degradation. Heavily N-glycosylated. About 30% of the protein mass is comprised of complex N-linked carbohydrate. Endoplasmic reticulum (ER) stress induces changes in glycosylation status and increases level of hypoglycosylated forms. Core carbohydrates are essential for chaperone activity. Non-secreted forms are hypoglycosylated or unglycosylated.

It is found in the secreted. Its subcellular location is the nucleus. The protein resides in the cytoplasm. It localises to the mitochondrion membrane. The protein localises to the cytosol. It is found in the microsome. Its subcellular location is the endoplasmic reticulum. The protein resides in the mitochondrion. It localises to the perinuclear region. The protein localises to the cytoplasmic vesicle. It is found in the secretory vesicle. Its subcellular location is the chromaffin granule. Functionally, functions as extracellular chaperone that prevents aggregation of non native proteins. Prevents stress-induced aggregation of blood plasma proteins. Inhibits formation of amyloid fibrils by APP, APOC2, B2M, CALCA, CSN3, SNCA and aggregation-prone LYZ variants (in vitro). Does not require ATP. Maintains partially unfolded proteins in a state appropriate for subsequent refolding by other chaperones, such as HSPA8/HSC70. Does not refold proteins by itself. Binding to cell surface receptors triggers internalization of the chaperone-client complex and subsequent lysosomal or proteasomal degradation. When secreted, protects cells against apoptosis and against cytolysis by complement: inhibits assembly of the complement membrane attack complex (MAC) by preventing polymerization of C9 pore component of the MAC complex. Intracellular forms interact with ubiquitin and SCF (SKP1-CUL1-F-box protein) E3 ubiquitin-protein ligase complexes and promote the ubiquitination and subsequent proteasomal degradation of target proteins. Promotes proteasomal degradation of COMMD1 and IKBKB. Modulates NF-kappa-B transcriptional activity. Following stress, promotes apoptosis. Inhibits apoptosis when associated with the mitochondrial membrane by interference with BAX-dependent release of cytochrome c into the cytoplasm. Plays a role in the regulation of cell proliferation. An intracellular form suppresses stress-induced apoptosis by stabilizing mitochondrial membrane integrity through interaction with HSPA5. Secreted form does not affect caspase or BAX-mediated intrinsic apoptosis and TNF-induced NF-kappa-B-activity. Secreted form act as an important modulator during neuronal differentiation through interaction with STMN3. Plays a role in the clearance of immune complexes that arise during cell injury. The protein is Clusterin (CLU) of Oryctolagus cuniculus (Rabbit).